The sequence spans 172 residues: Shikimate kinase (172 aa).

Residue 11–16 (GAGKST) coordinates ATP. Ser-15 contributes to the Mg(2+) binding site. Positions 33, 57, and 79 each coordinate substrate. Position 117 (Arg-117) interacts with ATP. Arg-136 contacts substrate. Arg-153 lines the ATP pocket.

This sequence belongs to the shikimate kinase family. As to quaternary structure, monomer. Mg(2+) is required as a cofactor.

Its subcellular location is the cytoplasm. The enzyme catalyses shikimate + ATP = 3-phosphoshikimate + ADP + H(+). Its pathway is metabolic intermediate biosynthesis; chorismate biosynthesis; chorismate from D-erythrose 4-phosphate and phosphoenolpyruvate: step 5/7. Functionally, catalyzes the specific phosphorylation of the 3-hydroxyl group of shikimic acid using ATP as a cosubstrate. The polypeptide is Shikimate kinase (Pseudomonas savastanoi pv. phaseolicola (strain 1448A / Race 6) (Pseudomonas syringae pv. phaseolicola (strain 1448A / Race 6))).